We begin with the raw amino-acid sequence, 572 residues long: Sulfite reductase [NADPH] hemoprotein beta-component (572 aa).

Residues C437, C443, C482, and C486 each coordinate [4Fe-4S] cluster. C486 is a binding site for siroheme.

The protein belongs to the nitrite and sulfite reductase 4Fe-4S domain family. In terms of assembly, alpha(8)-beta(8). The alpha component is a flavoprotein, the beta component is a hemoprotein. Requires siroheme as cofactor. [4Fe-4S] cluster is required as a cofactor.

It catalyses the reaction hydrogen sulfide + 3 NADP(+) + 3 H2O = sulfite + 3 NADPH + 4 H(+). Its pathway is sulfur metabolism; hydrogen sulfide biosynthesis; hydrogen sulfide from sulfite (NADPH route): step 1/1. In terms of biological role, component of the sulfite reductase complex that catalyzes the 6-electron reduction of sulfite to sulfide. This is one of several activities required for the biosynthesis of L-cysteine from sulfate. The polypeptide is Sulfite reductase [NADPH] hemoprotein beta-component (Staphylococcus epidermidis (strain ATCC 35984 / DSM 28319 / BCRC 17069 / CCUG 31568 / BM 3577 / RP62A)).